Reading from the N-terminus, the 95-residue chain is Alpha-bungarotoxin, isoform A31 (95 aa).

Positions 1–21 are cleaved as a signal peptide; that stretch reads MKTLLLTLVVVTIVCLDLGYT. 5 disulfide bridges follow: Cys-24–Cys-44, Cys-37–Cys-65, Cys-50–Cys-54, Cys-69–Cys-80, and Cys-81–Cys-86.

Belongs to the three-finger toxin family. Long-chain subfamily. Type II alpha-neurotoxin sub-subfamily. In terms of assembly, monomer in solution, homodimer in crystal state. As to expression, expressed by the venom gland.

It is found in the secreted. Its function is as follows. Binds with high affinity to muscular (tested on Torpedo marmorata, Kd=0.4 nM) and neuronal (tested on chimeric alpha-7/CHRNA7, Kd=0.95 nM) nicotinic acetylcholine receptor (nAChR) and inhibits acetylcholine from binding to the receptor, thereby impairing neuromuscular and neuronal transmission. It also shows an activity on GABA(A) receptors. It antagonises GABA-activated currents with high potency when tested on primary hippocampal neurons. It inhibits recombinantly expressed GABA(A) receptors composed of alpha-2-beta-2-gamma-2 (GABRA2-GABRB2-GABRG2) subunits with high potency (62.3% inhibition at 20 uM of toxin). It also shows a weaker inhibition on GABA(A) receptors composed of alpha-1-beta-2-gamma-2 (GABRA1-GABRB2-GABRG2) subunits, alpha-4-beta-2-gamma-2 (GABRA4-GABRB2-GABRG2) subunits, and alpha-5-beta-2-gamma-2 (GABRA5-GABRB2-GABRG2) subunits. A very weak inhibition is also observed on GABA(A) receptor composed of alpha-1-beta-3-gamma-2 (GABRA1-GABRB3-GABRG2). It has also been shown to bind and inhibit recombinant GABA(A) receptor beta-3/GABRB3 subunit (Kd=about 50 nM). In addition, it blocks the extracellular increase of dopamine evoked by nicotine only at the higher dose (4.2 uM). In vivo, when intraperitoneally injected into mice, induces flaccid paralysis of the limbs and respiratory distress, and causes death in a dose-dependent manner. This is Alpha-bungarotoxin, isoform A31 from Bungarus candidus (Malayan krait).